Reading from the N-terminus, the 132-residue chain is Large-conductance mechanosensitive channel (132 aa).

The next 2 helical transmembrane spans lie at 10-30 and 76-96; these read FAVK…SAFG and GNFI…FLAI.

It belongs to the MscL family. As to quaternary structure, homopentamer.

The protein localises to the cell inner membrane. Channel that opens in response to stretch forces in the membrane lipid bilayer. May participate in the regulation of osmotic pressure changes within the cell. The protein is Large-conductance mechanosensitive channel of Campylobacter hominis (strain ATCC BAA-381 / DSM 21671 / CCUG 45161 / LMG 19568 / NCTC 13146 / CH001A).